Reading from the N-terminus, the 759-residue chain is Forkhead box protein M1 (759 aa).

2 disordered regions span residues 1–54 (MRTS…AESS) and 94–165 (KGKE…QRQE). Polar residues predominate over residues 36–54 (PGQQEPTQAQASQDVAESS). Over residues 141-151 (LGPKPGAKGVP) the composition is skewed to low complexity. Glycyl lysine isopeptide (Lys-Gly) (interchain with G-Cter in SUMO2) cross-links involve residues Lys-200 and Lys-324. Positions 234–326 (ERPPYSYMAM…LTLDQVFKPL (93 aa)) form a DNA-binding region, fork-head. A disordered region spans residues 328 to 349 (PGSPQSPEHLESQQKRPNPELR). The residue at position 330 (Ser-330) is a Phosphoserine. A compositionally biased stretch (basic and acidic residues) spans 335-349 (EHLESQQKRPNPELR). Lys-355 participates in a covalent cross-link: Glycyl lysine isopeptide (Lys-Gly) (interchain with G-Cter in SUMO2). Ser-375 carries the post-translational modification Phosphoserine; by CHEK2. Residues Lys-421 and Lys-439 each participate in a glycyl lysine isopeptide (Lys-Gly) (interchain with G-Cter in SUMO2) cross-link. The residue at position 521 (Ser-521) is a Phosphoserine. 3 disordered regions span residues 530-556 (LVTKRREKREVSRSRRKQHLQPPCLDE), 572-643 (MEIL…PQGA), and 681-706 (LASDPFSSSPPPHLEAKPGSPELQVP). The span at 531–542 (VTKRREKREVSR) shows a compositional bias: basic and acidic residues. Over residues 604-613 (PVSSTPSKSV) the composition is skewed to polar residues. Residue Thr-608 is modified to Phosphothreonine; by CDK1. Thr-624 carries the post-translational modification Phosphothreonine. Phosphoserine; by PLK1 is present on residues Ser-726 and Ser-735.

Post-translationally, phosphorylated in M (mitotic) phase. Phosphorylation by the checkpoint kinase CHEK2 in response to DNA damage increases the FOXM1 protein stability probably stimulating the transcription of genes involved in DNA repair. Phosphorylated by CDK1 in late S and G2 phases, creating docking sites for the POLO box domains of PLK1. Subsequently, PLK1 binds and phosphorylates FOXM1, leading to activation of transcriptional activity and subsequent enhanced expression of key mitotic regulators. Phosphorylated by GSK3B leading to ubiquitination and proteasomal degradation. As to expression, highly expressed in thymus and testis, but weakly in intestine and lung. Appears to be expressed only in adult organs containing proliferating/cycling cells or in response to growth factors.

Its subcellular location is the nucleus. In terms of biological role, transcription factor regulating the expression of cell cycle genes essential for DNA replication and mitosis. Plays a role in the control of cell proliferation. Also plays a role in DNA break repair, participating in the DNA damage checkpoint response. Promotes transcription of PHB2. This chain is Forkhead box protein M1 (Foxm1), found in Rattus norvegicus (Rat).